The sequence spans 333 residues: Glyceraldehyde-3-phosphate dehydrogenase (333 aa).

NAD(+)-binding positions include 11–12, Asp-35, and Thr-121; that span reads RI. D-glyceraldehyde 3-phosphate contacts are provided by residues 151 to 153 and Thr-182; that span reads SCT. Cys-152 functions as the Nucleophile in the catalytic mechanism. Asn-183 contacts NAD(+). D-glyceraldehyde 3-phosphate-binding positions include Arg-197, 210 to 211, and Arg-233; that span reads TG. Asn-315 lines the NAD(+) pocket.

The protein belongs to the glyceraldehyde-3-phosphate dehydrogenase family. As to quaternary structure, homotetramer.

Its subcellular location is the cytoplasm. It carries out the reaction D-glyceraldehyde 3-phosphate + phosphate + NAD(+) = (2R)-3-phospho-glyceroyl phosphate + NADH + H(+). It functions in the pathway carbohydrate degradation; glycolysis; pyruvate from D-glyceraldehyde 3-phosphate: step 1/5. Catalyzes the oxidative phosphorylation of glyceraldehyde 3-phosphate (G3P) to 1,3-bisphosphoglycerate (BPG) using the cofactor NAD. The first reaction step involves the formation of a hemiacetal intermediate between G3P and a cysteine residue, and this hemiacetal intermediate is then oxidized to a thioester, with concomitant reduction of NAD to NADH. The reduced NADH is then exchanged with the second NAD, and the thioester is attacked by a nucleophilic inorganic phosphate to produce BPG. This chain is Glyceraldehyde-3-phosphate dehydrogenase (gap), found in Thermotoga maritima (strain ATCC 43589 / DSM 3109 / JCM 10099 / NBRC 100826 / MSB8).